The following is a 405-amino-acid chain: Acetate kinase (405 aa).

Asparagine 10 is a binding site for Mg(2+). Lysine 17 provides a ligand contact to ATP. Arginine 93 lines the substrate pocket. Aspartate 150 (proton donor/acceptor) is an active-site residue. ATP-binding positions include 210–214 (HLGNG), 284–286 (DMR), and 332–336 (GVGEN). Glutamate 386 lines the Mg(2+) pocket.

This sequence belongs to the acetokinase family. Homodimer. The cofactor is Mg(2+). Mn(2+) is required as a cofactor.

The protein resides in the cytoplasm. It catalyses the reaction acetate + ATP = acetyl phosphate + ADP. It functions in the pathway metabolic intermediate biosynthesis; acetyl-CoA biosynthesis; acetyl-CoA from acetate: step 1/2. In terms of biological role, catalyzes the formation of acetyl phosphate from acetate and ATP. Can also catalyze the reverse reaction. The protein is Acetate kinase of Streptomyces avermitilis (strain ATCC 31267 / DSM 46492 / JCM 5070 / NBRC 14893 / NCIMB 12804 / NRRL 8165 / MA-4680).